Reading from the N-terminus, the 350-residue chain is Small ribosomal subunit biogenesis GTPase RsgA (350 aa).

Residues 1 to 30 (MSKRKLTQNQQRRIQSNNAKTLHRHQHRHK) form a disordered region. The segment covering 7–20 (TQNQQRRIQSNNAK) has biased composition (polar residues). The segment covering 21–30 (TLHRHQHRHK) has biased composition (basic residues). The 169-residue stretch at 106–274 (HNQIVRPDYY…LIDSPGIREF (169 aa)) folds into the CP-type G domain. Residues 162–165 (NKAD) and 216–224 (GQSGVGKSS) each bind GTP. The Zn(2+) site is built by cysteine 298, cysteine 303, histidine 305, and cysteine 311.

The protein belongs to the TRAFAC class YlqF/YawG GTPase family. RsgA subfamily. Monomer. Associates with 30S ribosomal subunit, binds 16S rRNA. Zn(2+) is required as a cofactor.

It is found in the cytoplasm. Functionally, one of several proteins that assist in the late maturation steps of the functional core of the 30S ribosomal subunit. Helps release RbfA from mature subunits. May play a role in the assembly of ribosomal proteins into the subunit. Circularly permuted GTPase that catalyzes slow GTP hydrolysis, GTPase activity is stimulated by the 30S ribosomal subunit. This Histophilus somni (strain 2336) (Haemophilus somnus) protein is Small ribosomal subunit biogenesis GTPase RsgA.